Consider the following 366-residue polypeptide: Galactoside alpha-(1,2)-fucosyltransferase 1 (366 aa).

Residues 1–8 (MWPLSHRH) lie on the Cytoplasmic side of the membrane. The chain crosses the membrane as a helical; Signal-anchor for type II membrane protein span at residues 9 to 25 (LCLAFLLVCVLSAISFF). Residues 26–366 (LHVHQDSFRH…LSPLWTLAEP (341 aa)) lie on the Lumenal side of the membrane. Asn66, Asn302, and Asn328 each carry an N-linked (GlcNAc...) asparagine glycan.

It belongs to the glycosyltransferase 11 family.

The protein localises to the golgi apparatus. It localises to the golgi stack membrane. The enzyme catalyses a beta-D-galactosyl-(1-&gt;4)-N-acetyl-beta-D-glucosaminyl derivative + GDP-beta-L-fucose = an alpha-L-Fuc-(1-&gt;2)-beta-D-Gal-(1-&gt;4)-beta-D-GlcNAc derivative + GDP + H(+). It catalyses the reaction a ganglioside GA1 + GDP-beta-L-fucose = a ganglioside Fuc-GA1 + GDP + H(+). It carries out the reaction a beta-D-Gal-(1-&gt;3)-beta-D-GlcNAc-(1-&gt;3)-beta-D-Gal-(1-&gt;4)-beta-D-Glc-(1&lt;-&gt;1')-Cer(d18:1(4E)) + GDP-beta-L-fucose = alpha-L-fucosyl-(1-&gt;2)- beta-D-galactosyl-(1-&gt;3)-N-acetyl-beta-D-glucosaminyl-(1-&gt;3)-beta-D-galactosyl-(1-&gt;4)-beta-D-glucosyl-(1&lt;-&gt;1')-N-acylsphing-4-enine + GDP + H(+). The catalysed reaction is a neolactoside nLc4Cer(d18:1(4E)) + GDP-beta-L-fucose = a neolactoside IV(2)-alpha-Fuc-nLc4Cer(d18:1(4E)) + GDP + H(+). The enzyme catalyses a ganglioside GM1 + GDP-beta-L-fucose = a ganglioside Fuc-GM1 + GDP + H(+). It catalyses the reaction beta-D-galactosyl-(1-&gt;3)-N-acetyl-D-galactosamine + GDP-beta-L-fucose = alpha-L-fucosyl-(1-&gt;2)-beta-D-galactosyl-(1-&gt;3)-N-acetyl-D-galactosamine + GDP + H(+). It participates in protein modification; protein glycosylation. Its function is as follows. Catalyzes the transfer of L-fucose, from a guanosine diphosphate-beta-L-fucose, to the terminal galactose residue of glycoconjugates through an alpha(1,2) linkage leading to H antigen synthesis that is an intermediate substrate in the synthesis of ABO blood group antigens. H antigen is essential for maturation of the glomerular layer of the main olfactory bulb, in cell migration and early cell-cell contacts during tumor associated angiogenesis. Preferentially fucosylates soluble lactose and to a lesser extent fucosylates glycolipids gangliosides GA1 and GM1a. The protein is Galactoside alpha-(1,2)-fucosyltransferase 1 of Alouatta belzebul (Red-handed howler monkey).